The chain runs to 43 residues: SPbeta prophage-derived uncharacterized protein YopG (43 aa).

This chain is SPbeta prophage-derived uncharacterized protein YopG (yopG), found in Bacillus subtilis (strain 168).